A 585-amino-acid chain; its full sequence is Stage II sporulation protein E (585 aa).

A run of 2 helical transmembrane segments spans residues L40–A57 and S70–K86. A PPM-type phosphatase domain is found at D355–L565.

It localises to the cell membrane. It catalyses the reaction O-phospho-L-seryl-[protein] + H2O = L-seryl-[protein] + phosphate. It carries out the reaction O-phospho-L-threonyl-[protein] + H2O = L-threonyl-[protein] + phosphate. In terms of biological role, normally needed for pro-sigma E processing during sporulation but can be bypassed in vegetative cells. Activates SpoIIAA by dephosphorylation. This Priestia megaterium (Bacillus megaterium) protein is Stage II sporulation protein E (spoIIE).